Here is a 131-residue protein sequence, read N- to C-terminus: Modulator protein MzrA (131 aa).

Over methionine 1–lysine 14 the chain is Cytoplasmic. Residues valine 15–glutamine 31 traverse the membrane as a helical segment. The Periplasmic portion of the chain corresponds to serine 32 to glycine 131.

This sequence belongs to the MzrA family. As to quaternary structure, interacts with EnvZ.

The protein resides in the cell inner membrane. Its function is as follows. Modulates the activity of the EnvZ/OmpR two-component regulatory system, probably by directly modulating EnvZ enzymatic activity and increasing stability of phosphorylated OmpR. This is Modulator protein MzrA from Pectobacterium carotovorum subsp. carotovorum (strain PC1).